The following is a 231-amino-acid chain: MLDPKVIVALDYPNQDAALAFVDRIEPGSCRLKVGKEMFTLYGPDFVRKLHECGHSVFLDLKFHDIPNTCSRAVAAAAELGVWMVNVHASGGERMMAASRDILEPYGKDRPLLIAVTVLTSMEASDLAGIGIACAPQEQVLNLATLTKNSGLDGVVCSAQESTMLKSALGKEFQLITPGIRPVGSAAGDQRRVMTPVEAVSAGSDYLVIGRPITQATDPSAVLAEINQSLA.

Substrate-binding positions include Asp11, Lys33, 60–69 (DLKFHDIPNT), Thr120, Arg181, Gln190, Gly210, and Arg211. Lys62 functions as the Proton donor in the catalytic mechanism.

It belongs to the OMP decarboxylase family. Type 1 subfamily. In terms of assembly, homodimer.

The catalysed reaction is orotidine 5'-phosphate + H(+) = UMP + CO2. It participates in pyrimidine metabolism; UMP biosynthesis via de novo pathway; UMP from orotate: step 2/2. In terms of biological role, catalyzes the decarboxylation of orotidine 5'-monophosphate (OMP) to uridine 5'-monophosphate (UMP). The polypeptide is Orotidine 5'-phosphate decarboxylase (Photobacterium profundum (strain SS9)).